Consider the following 1284-residue polypeptide: Putative late blight resistance protein homolog R1B-16 (1284 aa).

Residues Pro533–Asn555 adopt a coiled-coil conformation. In terms of domain architecture, NB-ARC spans Arg534–Gly821. Gly567–Thr574 is a binding site for ATP. 8 LRR repeats span residues Phe942–Leu966, Leu985–Met1010, Leu1013–Leu1036, Pro1085–Ser1107, Ala1108–Asn1135, Phe1159–Ala1181, Phe1182–Ile1206, and Glu1219–Leu1243. Residues Cys1217–Leu1284 enclose the HMA domain.

It belongs to the disease resistance NB-LRR family.

The protein localises to the cytoplasm. Its subcellular location is the membrane. Confers resistance to late blight (Phytophthora infestans) races carrying the avirulence gene Avr1. Resistance proteins guard the plant against pathogens that contain an appropriate avirulence protein via an indirect interaction with this avirulence protein. That triggers a defense system including the hypersensitive response, which restricts the pathogen growth. The polypeptide is Putative late blight resistance protein homolog R1B-16 (R1B-16) (Solanum demissum (Wild potato)).